A 460-amino-acid polypeptide reads, in one-letter code: Argininosuccinate lyase (460 aa).

Belongs to the lyase 1 family. Argininosuccinate lyase subfamily.

Its subcellular location is the cytoplasm. The enzyme catalyses 2-(N(omega)-L-arginino)succinate = fumarate + L-arginine. The protein operates within amino-acid biosynthesis; L-arginine biosynthesis; L-arginine from L-ornithine and carbamoyl phosphate: step 3/3. This chain is Argininosuccinate lyase, found in Streptococcus mutans serotype c (strain ATCC 700610 / UA159).